Consider the following 365-residue polypeptide: tRNA/tmRNA (uracil-C(5))-methyltransferase (365 aa).

Gln189, Tyr217, Asn222, Glu238, and Asp298 together coordinate S-adenosyl-L-methionine. Cys323 functions as the Nucleophile in the catalytic mechanism. Glu357 serves as the catalytic Proton acceptor.

It belongs to the class I-like SAM-binding methyltransferase superfamily. RNA M5U methyltransferase family. TrmA subfamily.

The catalysed reaction is uridine(54) in tRNA + S-adenosyl-L-methionine = 5-methyluridine(54) in tRNA + S-adenosyl-L-homocysteine + H(+). It catalyses the reaction uridine(341) in tmRNA + S-adenosyl-L-methionine = 5-methyluridine(341) in tmRNA + S-adenosyl-L-homocysteine + H(+). Its function is as follows. Dual-specificity methyltransferase that catalyzes the formation of 5-methyluridine at position 54 (m5U54) in all tRNAs, and that of position 341 (m5U341) in tmRNA (transfer-mRNA). This Saccharophagus degradans (strain 2-40 / ATCC 43961 / DSM 17024) protein is tRNA/tmRNA (uracil-C(5))-methyltransferase.